Here is a 123-residue protein sequence, read N- to C-terminus: Histone H2B (123 aa).

The interval 1-31 (MPPKVASKGAKKAASKAKAARSGEKKKKRRR) is disordered. Basic residues predominate over residues 9 to 31 (GAKKAASKAKAARSGEKKKKRRR). Ser110 carries an O-linked (GlcNAc) serine glycan. A Glycyl lysine isopeptide (Lys-Gly) (interchain with G-Cter in ubiquitin) cross-link involves residue Lys118.

Belongs to the histone H2B family. As to quaternary structure, the nucleosome is a histone octamer containing two molecules each of H2A, H2B, H3 and H4 assembled in one H3-H4 heterotetramer and two H2A-H2B heterodimers. The octamer wraps approximately 147 bp of DNA. Post-translationally, monoubiquitination of Lys-118 gives a specific tag for epigenetic transcriptional activation and is also prerequisite for histone H3 'Lys-4' and 'Lys-79' methylation. In terms of processing, glcNAcylation at Ser-110 promotes monoubiquitination of Lys-118. It fluctuates in response to extracellular glucose, and associates with transcribed genes.

The protein resides in the nucleus. It is found in the chromosome. Core component of nucleosome. Nucleosomes wrap and compact DNA into chromatin, limiting DNA accessibility to the cellular machineries which require DNA as a template. Histones thereby play a central role in transcription regulation, DNA repair, DNA replication and chromosomal stability. DNA accessibility is regulated via a complex set of post-translational modifications of histones, also called histone code, and nucleosome remodeling. The chain is Histone H2B from Platynereis dumerilii (Dumeril's clam worm).